A 378-amino-acid chain; its full sequence is Mas-related G-protein coupled receptor MRG (378 aa).

At 1-77 the chain is on the extracellular side; that stretch reads MVWGKICWFS…VGQQALPLNI (77 aa). Residues asparagine 54 and asparagine 57 are each glycosylated (N-linked (GlcNAc...) asparagine). The helical transmembrane segment at 78-101 threads the bilayer; the sequence is IAPKAVLVSLCGVLLNGTVFWLLC. Residues 102-109 are Cytoplasmic-facing; that stretch reads CGATNPYM. The chain crosses the membrane as a helical span at residues 110-136; sequence VYILHLVAADVIYLCCSAVGFLQVTLL. At 137–154 the chain is on the extracellular side; sequence TYHGVVFFIPDFLAILSP. Residues 155–169 form a helical membrane-spanning segment; sequence FSFEVCLCLLVAIST. Residues 170-191 are Cytoplasmic-facing; sequence ERCVCVLFPIWYRCHRPKYTSN. The chain crosses the membrane as a helical span at residues 192–207; that stretch reads VVCTLIWGLPFCINIV. The Extracellular portion of the chain corresponds to 208–221; it reads KSLFLTYWKHVKAC. The chain crosses the membrane as a helical span at residues 222-248; sequence VIFLKLSGLFHAILSLVMCVSSLTLLI. At 249 to 264 the chain is on the cytoplasmic side; that stretch reads RFLCCSQQQKATRVYA. Residues 265 to 286 traverse the membrane as a helical segment; it reads VVQISAPMFLLWALPLSVAPLI. At 287–297 the chain is on the extracellular side; that stretch reads TDFKMFVTTSY. The helical transmembrane segment at 298–317 threads the bilayer; sequence LISLFLIINSSANPIIYFFV. At 318-378 the chain is on the cytoplasmic side; it reads GSLRKKRLKE…PREHRVDVET (61 aa). Residues 344–378 are disordered; that stretch reads GRNKKAAGIDPMEQPHSTQHVENLLPREHRVDVET. Residues 368-378 are compositionally biased toward basic and acidic residues; it reads LPREHRVDVET.

Belongs to the G-protein coupled receptor 1 family. Mas subfamily.

The protein resides in the cell membrane. This Homo sapiens (Human) protein is Mas-related G-protein coupled receptor MRG (MAS1L).